The sequence spans 476 residues: Angiotensinogen (476 aa).

An N-terminal signal peptide occupies residues 1 to 24 (MAPAGLSLGAAILCLLAWAGLAAG). Cysteine 42 and cysteine 161 are disulfide-bonded. N-linked (GlcNAc...) asparagine glycans are attached at residues asparagine 295, asparagine 319, asparagine 362, and asparagine 401.

This sequence belongs to the serpin family. Post-translationally, in response to low blood pressure, the enzyme renin/REN cleaves angiotensinogen to produce angiotensin-1. Angiotensin-1 is a substrate of ACE (angiotensin converting enzyme) that removes a dipeptide to yield the physiologically active peptide angiotensin-2. Angiotensin-1 and angiotensin-2 can be further processed to generate angiotensin-3, angiotensin-4. Angiotensin 1-9 is cleaved from angiotensin-1 by ACE2 and can be further processed by ACE to produce angiotensin 1-7, angiotensin 1-5 and angiotensin 1-4. Angiotensin 1-7 has also been proposed to be cleaved from angiotensin-2 by ACE2 or from angiotensin-1 by MME (neprilysin). The disulfide bond is labile. Angiotensinogen is present in the circulation in a near 40:60 ratio with the oxidized disulfide-bonded form, which preferentially interacts with receptor-bound renin.

Its subcellular location is the secreted. Essential component of the renin-angiotensin system (RAS), a potent regulator of blood pressure, body fluid and electrolyte homeostasis. Its function is as follows. Acts directly on vascular smooth muscle as a potent vasoconstrictor, affects cardiac contractility and heart rate through its action on the sympathetic nervous system, and alters renal sodium and water absorption through its ability to stimulate the zona glomerulosa cells of the adrenal cortex to synthesize and secrete aldosterone. Acts by binding to angiotensin receptors AGTR1 and AGTR2. Also binds the DEAR/FBXW7-AS1 receptor. In terms of biological role, stimulates aldosterone release. Functionally, is a ligand for the G-protein coupled receptor MAS1. Has vasodilator and antidiuretic effects. Has an antithrombotic effect that involves MAS1-mediated release of nitric oxide from platelets. This is Angiotensinogen (AGT) from Bos taurus (Bovine).